The primary structure comprises 447 residues: UDP-N-acetylmuramoyl-L-alanyl-D-glutamate--2,6-diaminopimelate ligase (447 aa).

Residue threonine 21 participates in UDP-N-acetyl-alpha-D-muramoyl-L-alanyl-D-glutamate binding. 74–80 (GTNGKTT) is an ATP binding site. Residues 117–118 (TT), serine 144, glutamine 150, and arginine 152 contribute to the UDP-N-acetyl-alpha-D-muramoyl-L-alanyl-D-glutamate site. Lysine 184 is subject to N6-carboxylysine. Meso-2,6-diaminopimelate-binding positions include arginine 340, 364 to 367 (DNPR), glycine 415, and glutamate 419. Residues 364–367 (DNPR) carry the Meso-diaminopimelate recognition motif motif.

It belongs to the MurCDEF family. MurE subfamily. It depends on Mg(2+) as a cofactor. Post-translationally, carboxylation is probably crucial for Mg(2+) binding and, consequently, for the gamma-phosphate positioning of ATP.

The protein resides in the cytoplasm. It catalyses the reaction UDP-N-acetyl-alpha-D-muramoyl-L-alanyl-D-glutamate + meso-2,6-diaminopimelate + ATP = UDP-N-acetyl-alpha-D-muramoyl-L-alanyl-gamma-D-glutamyl-meso-2,6-diaminopimelate + ADP + phosphate + H(+). It participates in cell wall biogenesis; peptidoglycan biosynthesis. Its function is as follows. Catalyzes the addition of meso-diaminopimelic acid to the nucleotide precursor UDP-N-acetylmuramoyl-L-alanyl-D-glutamate (UMAG) in the biosynthesis of bacterial cell-wall peptidoglycan. This chain is UDP-N-acetylmuramoyl-L-alanyl-D-glutamate--2,6-diaminopimelate ligase, found in Helicobacter pylori (strain J99 / ATCC 700824) (Campylobacter pylori J99).